The primary structure comprises 512 residues: ATP synthase subunit alpha (512 aa).

An ATP-binding site is contributed by 169-176 (GDRQTGKT).

It belongs to the ATPase alpha/beta chains family. F-type ATPases have 2 components, CF(1) - the catalytic core - and CF(0) - the membrane proton channel. CF(1) has five subunits: alpha(3), beta(3), gamma(1), delta(1), epsilon(1). CF(0) has three main subunits: a(1), b(2) and c(9-12). The alpha and beta chains form an alternating ring which encloses part of the gamma chain. CF(1) is attached to CF(0) by a central stalk formed by the gamma and epsilon chains, while a peripheral stalk is formed by the delta and b chains.

The protein localises to the cell inner membrane. The enzyme catalyses ATP + H2O + 4 H(+)(in) = ADP + phosphate + 5 H(+)(out). Functionally, produces ATP from ADP in the presence of a proton gradient across the membrane. The alpha chain is a regulatory subunit. The protein is ATP synthase subunit alpha of Rickettsia bellii (strain OSU 85-389).